Here is a 732-residue protein sequence, read N- to C-terminus: Anthranilate synthase (732 aa).

The Glutamine amidotransferase type-1 domain occupies 533-728 (RVLLVDHDDS…MDRLAAGALT (196 aa)). Position 583-585 (583-585 (GPG)) interacts with L-glutamine. Cys-610 (nucleophile; for GATase activity) is an active-site residue. Residues Gln-614 and 660 to 661 (SL) each bind L-glutamine. Catalysis depends on for GATase activity residues His-699 and Glu-701.

It catalyses the reaction chorismate + L-glutamine = anthranilate + pyruvate + L-glutamate + H(+). Its pathway is amino-acid biosynthesis; L-tryptophan biosynthesis; L-tryptophan from chorismate: step 1/5. In Azospirillum brasilense, this protein is Anthranilate synthase (trpE(G)).